Here is a 533-residue protein sequence, read N- to C-terminus: Probable anion transporter 4, chloroplastic (533 aa).

A run of 12 helical transmembrane segments spans residues 117 to 137 (MLAL…VAIV), 152 to 172 (IVQS…GTLV), 179 to 199 (VVMA…PWAA), 203 to 223 (LWAL…ALPC), 243 to 263 (IAMA…PILM), 267 to 287 (GIYG…LVWL), 342 to 362 (VIVA…WMPI), 376 to 396 (AWFS…AGFW), 417 to 437 (IGFI…QPLV), 438 to 458 (ASAW…GFLI), 474 to 494 (MCLT…GFFV), and 502 to 522 (GFIL…NIYA).

It belongs to the major facilitator superfamily. Sodium/anion cotransporter (TC 2.A.1.14) family. In terms of tissue distribution, expressed in leaf veins and root tips.

The protein localises to the plastid. The protein resides in the chloroplast membrane. Its function is as follows. Inorganic phosphate and probable anion transporter. This chain is Probable anion transporter 4, chloroplastic (ANTR4), found in Arabidopsis thaliana (Mouse-ear cress).